A 507-amino-acid chain; its full sequence is 2,3-bisphosphoglycerate-independent phosphoglycerate mutase (507 aa).

Mn(2+) contacts are provided by aspartate 11 and serine 61. Serine 61 acts as the Phosphoserine intermediate in catalysis. Substrate-binding positions include histidine 122, 152–153 (RD), arginine 183, arginine 189, 258–261 (RNDR), and lysine 332. 5 residues coordinate Mn(2+): aspartate 399, histidine 403, aspartate 440, histidine 441, and histidine 458.

The protein belongs to the BPG-independent phosphoglycerate mutase family. In terms of assembly, monomer. Requires Mn(2+) as cofactor.

The catalysed reaction is (2R)-2-phosphoglycerate = (2R)-3-phosphoglycerate. It functions in the pathway carbohydrate degradation; glycolysis; pyruvate from D-glyceraldehyde 3-phosphate: step 3/5. Its function is as follows. Catalyzes the interconversion of 2-phosphoglycerate and 3-phosphoglycerate. This is 2,3-bisphosphoglycerate-independent phosphoglycerate mutase from Parabacteroides distasonis (strain ATCC 8503 / DSM 20701 / CIP 104284 / JCM 5825 / NCTC 11152).